The following is a 622-amino-acid chain: MALLQISEPGMAPAPHQRRLAVGIDLGTTNSLVAAVRNSIPEALPDDTGRVLLPSVVRYLEKGGRRIGHAAKEEAAIDPRNTIVSVKRFMGRGKAEVEGAANAPYEFVDAPGMVQIRTVDGVKSPVEVSAEILATLRQRAEDTLGDDLVGAVITVPAYFDDAQRQATKDAARLAGLNVLRLLNEPTAAAIAYGLDNGAEGLYAVYDLGGGTFDLSILKLTKGVFEVLAAGGDSALGGDDFDHLLFAHVLVQAGLDAAALAPEDVRLLLDRVRGVKEALSAAQQAQLDVKLSTGEKLVQTITRDTFAALVEPLVQRTLAPTRKALRDARVSAADIKGVVLVGGATRMPVIRDAVEKYFGQPPLVNLDPDQVVALGAAIQADLLAGNRSGGDDWLLLDVIPLSLGVETMGGLVEKIIPRNSTIPVARAQEFTTFKDGQTAMAIHVVQGERELVSDCRSLARFELRGIPPMAAGAARIRVTYQVDADGLLSVFAREQHSGVEASVVVKPSYGLGDDDIARMLEDSFKTAEVDMRARALREAQVEAQRLVEATEAALAADGDLLDASERATVEALVASLRALAPGDDANAIDAATKALAEGTDEFAARRMNKSIKRALAGRKLDEI.

It belongs to the heat shock protein 70 family.

Its function is as follows. Chaperone involved in the maturation of iron-sulfur cluster-containing proteins. Has a low intrinsic ATPase activity which is markedly stimulated by HscB. In Burkholderia thailandensis (strain ATCC 700388 / DSM 13276 / CCUG 48851 / CIP 106301 / E264), this protein is Chaperone protein HscA homolog.